A 286-amino-acid polypeptide reads, in one-letter code: MKNILSIQSHVVFGHAGNSAAEFPMRRMGVNVWPLNTVQFSNHTQYGHWTGCVMPASHLTDIVQGIADIDRLKDCDAVLSGYIGSPEQGSHILAAVAQVKQANPDAWYFCDPVMGHPEKGCIVAPGVAEFFCNEALPASDMIAPNLLELEQLSGERVENVEQAVQVARSLCARGPKVVLVKHLSRAGYHADCFEMLLVTADDAWHISRPLVDFGKRQPVGVGDLTSGLLLVNLLKGEPLDKALEHVTAAVYEVMLKTQEMGEYELQVVAAQETIVTPICQFTAVRL.

Substrate is bound by residues S9 and 44-45; that span reads TQ. ATP-binding positions include D111, A143, E148, K181, and 208-211; that span reads RPLV. D223 contributes to the substrate binding site.

Belongs to the pyridoxine kinase family. PdxY subfamily. In terms of assembly, homodimer. Mg(2+) is required as a cofactor.

It carries out the reaction pyridoxal + ATP = pyridoxal 5'-phosphate + ADP + H(+). It participates in cofactor metabolism; pyridoxal 5'-phosphate salvage; pyridoxal 5'-phosphate from pyridoxal: step 1/1. Functionally, pyridoxal kinase involved in the salvage pathway of pyridoxal 5'-phosphate (PLP). Catalyzes the phosphorylation of pyridoxal to PLP. This Yersinia pseudotuberculosis serotype I (strain IP32953) protein is Pyridoxal kinase PdxY.